Here is a 450-residue protein sequence, read N- to C-terminus: F-box protein KIB3 (450 aa).

The 31-residue stretch at D20 to S50 folds into the F-box domain.

Its subcellular location is the cytoplasm. The protein resides in the nucleus. It is found in the nucleolus. Component of SCF(ASK-cullin-F-box) E3 ubiquitin ligase complexes, which may mediate the ubiquitination and subsequent proteasomal degradation of target proteins. Required for brassinosteroid (BR) signal transduction. Mediates ASK7/BIN2/SK21 inactivation both by competing with substrate binding (e.g. BZR1) and by promoting its ubiquitination and subsequent proteasomal degradation. This Arabidopsis thaliana (Mouse-ear cress) protein is F-box protein KIB3.